Here is a 1105-residue protein sequence, read N- to C-terminus: Lysylphosphatidylglycerol biosynthesis bifunctional protein LysX (1105 aa).

Positions 1-603 (MTVTKPRSVQ…LLHHDGSAPD (603 aa)) are phosphatidylglycerol lysyltransferase. The next 7 membrane-spanning stretches (helical) occupy residues 20–40 (VPAA…LASI), 62–82 (FPDT…ALAA), 86–106 (IAWL…AADI), 117–137 (FGEN…VLGY), 154–174 (AVLV…VDLF), 186–203 (YVAN…DLFT), and 208–228 (VFLN…ATIV). The tract at residues 604–1105 (VSGLRQSAIA…TLPFPLAKPH (502 aa)) is lysine--tRNA ligase. Mg(2+) is bound by residues Asp1017 and Glu1024.

The protein in the N-terminal section; belongs to the LPG synthetase family. In the C-terminal section; belongs to the class-II aminoacyl-tRNA synthetase family. The cofactor is Mg(2+).

The protein localises to the cell membrane. The enzyme catalyses tRNA(Lys) + L-lysine + ATP = L-lysyl-tRNA(Lys) + AMP + diphosphate. It carries out the reaction L-lysyl-tRNA(Lys) + a 1,2-diacyl-sn-glycero-3-phospho-(1'-sn-glycerol) = a 1,2-diacyl-sn-glycero-3-phospho-1'-(3'-O-L-lysyl)-sn-glycerol + tRNA(Lys). Catalyzes the production of L-lysyl-tRNA(Lys)transfer and the transfer of a lysyl group from L-lysyl-tRNA(Lys) to membrane-bound phosphatidylglycerol (PG), which produces lysylphosphatidylglycerol (LPG), one of the components of the bacterial membrane with a positive net charge. LPG synthesis contributes to the resistance to cationic antimicrobial peptides (CAMPs) and likely protects M.tuberculosis against the CAMPs produced by competiting microorganisms (bacteriocins). In fact, the modification of anionic phosphatidylglycerol with positively charged L-lysine results in repulsion of the peptides. The sequence is that of Lysylphosphatidylglycerol biosynthesis bifunctional protein LysX (lysX) from Mycobacterium ulcerans (strain Agy99).